Reading from the N-terminus, the 131-residue chain is UPF0102 protein YraN (131 aa).

Belongs to the UPF0102 family.

This chain is UPF0102 protein YraN, found in Salmonella typhimurium (strain LT2 / SGSC1412 / ATCC 700720).